Here is a 448-residue protein sequence, read N- to C-terminus: Signal recognition particle 54 kDa protein (448 aa).

GTP contacts are provided by residues 107–114, 189–193, and 247–250; these read GIQGSGKT, DTAGR, and TKLD.

This sequence belongs to the GTP-binding SRP family. SRP54 subfamily. Part of the signal recognition particle protein translocation system, which is composed of SRP and FtsY. Archaeal SRP consists of a 7S RNA molecule of 300 nucleotides and two protein subunits: SRP54 and SRP19.

The protein resides in the cytoplasm. It catalyses the reaction GTP + H2O = GDP + phosphate + H(+). Involved in targeting and insertion of nascent membrane proteins into the cytoplasmic membrane. Binds to the hydrophobic signal sequence of the ribosome-nascent chain (RNC) as it emerges from the ribosomes. The SRP-RNC complex is then targeted to the cytoplasmic membrane where it interacts with the SRP receptor FtsY. In Thermococcus gammatolerans (strain DSM 15229 / JCM 11827 / EJ3), this protein is Signal recognition particle 54 kDa protein.